The primary structure comprises 420 residues: Methyltransferase/ribosomally synthesized cyclic peptide gymnopeptides precursor gymMA1 (420 aa).

The methyltransferase domain stretch occupies residues Met1–Lys251. Residues Arg72, Tyr76, and Tyr98 contribute to the active site. 8 residues coordinate S-adenosyl-L-methionine: Tyr98, His100, Val103, Ala130, Gln172, Ala213, Ser244, and Thr245. The tract at residues Glu252 to Met378 is clasp domain. Residues Pro379–Pro392 are precursor leader. Val394 and Val396 each carry N-methylvaline. Gly398 bears the N-methylglycine mark. Position 399 is an N-methylvaline (Val399). Ala400 is subject to N-methylalanine. An N-methylglycine modification is found at Gly402. An N-methylvaline mark is found at Val404, Val406, Val408, and Val410.

It in the N-terminal section; belongs to the precorrin methyltransferase family. Homodimer. Post-translationally, gymMA1 automethylates at Val-394, Val-396, Gly-398, Val-399, Ala-400, Gly-402, Val-404, Val-406, Val-408 and Val-410 before being processed by a prolyloligopeptidase which likely forms a peptidyl ester upon removal of the follower propeptide, which then undergoes macrocyclization with the N-terminus of the modified core peptide. Peptide backbone alpha-N-methylations change the physicochemical properties of amide bonds to provide structural constraints and other favorable characteristics including biological membrane permeability to peptides.

It functions in the pathway mycotoxin biosynthesis. Functionally, fusion protein of the methyltransferase gymM1 and the gymnopeptides precursor; part of the gene cluster that mediates the biosynthesis of gymnopeptides, highly methylated cyclic octadecapeptides with striking antiproliferative activity on several human cancer cell lines. Gymnopeptides derive from the C-terminus of the gymMA1 protein, and it is the gymMA1 protein that methylates its own C-terminus using S-adenosyl methionine (SAM). The C-terminus is subsequently cleaved off and macrocyclized by a prolyloligopeptidase to give the final product. In Gymnopus fusipes (Spindle toughshank), this protein is Methyltransferase/ribosomally synthesized cyclic peptide gymnopeptides precursor gymMA1.